The following is a 510-amino-acid chain: Zinc metalloproteinase (510 aa).

Positions 1–24 are cleaved as a signal peptide; that stretch reads MKSKLICIIMVIAFQAHFTMTVKA. Residues 25-200 constitute a propeptide that is removed on maturation; that stretch reads DSVGEEKLQN…ILKKQNMLSE (176 aa). Residue H349 participates in Zn(2+) binding. E350 is an active-site residue. Positions 353 and 373 each coordinate Zn(2+). H437 acts as the Proton donor in catalysis.

Belongs to the peptidase M4 family. Requires Zn(2+) as cofactor.

The protein resides in the secreted. Probably linked to the pathogenesis of listerial infection. The sequence is that of Zinc metalloproteinase (mpl) from Listeria monocytogenes serovar 1/2a (strain ATCC BAA-679 / EGD-e).